A 152-amino-acid chain; its full sequence is Ribosome maturation factor RimP (152 aa).

It belongs to the RimP family.

It localises to the cytoplasm. Its function is as follows. Required for maturation of 30S ribosomal subunits. The polypeptide is Ribosome maturation factor RimP (Pseudomonas putida (strain GB-1)).